The chain runs to 427 residues: Tol-Pal system protein TolB (427 aa).

Residues 1–23 (MKLLKRLVSVFAIVLAVGSNAFA) form the signal peptide.

Belongs to the TolB family. The Tol-Pal system is composed of five core proteins: the inner membrane proteins TolA, TolQ and TolR, the periplasmic protein TolB and the outer membrane protein Pal. They form a network linking the inner and outer membranes and the peptidoglycan layer.

Its subcellular location is the periplasm. In terms of biological role, part of the Tol-Pal system, which plays a role in outer membrane invagination during cell division and is important for maintaining outer membrane integrity. This Haemophilus influenzae (strain ATCC 51907 / DSM 11121 / KW20 / Rd) protein is Tol-Pal system protein TolB.